We begin with the raw amino-acid sequence, 263 residues long: Phosphate import ATP-binding protein PstB (263 aa).

Residues 17–258 form the ABC transporter domain; that stretch reads IDVRDLNFYY…PRRKETEDYI (242 aa). Residue 49–56 coordinates ATP; sequence GPSGCGKS.

It belongs to the ABC transporter superfamily. Phosphate importer (TC 3.A.1.7) family. The complex is composed of two ATP-binding proteins (PstB), two transmembrane proteins (PstC and PstA) and a solute-binding protein (PstS).

It localises to the cell inner membrane. The enzyme catalyses phosphate(out) + ATP + H2O = ADP + 2 phosphate(in) + H(+). Part of the ABC transporter complex PstSACB involved in phosphate import. Responsible for energy coupling to the transport system. The protein is Phosphate import ATP-binding protein PstB of Ralstonia nicotianae (strain ATCC BAA-1114 / GMI1000) (Ralstonia solanacearum).